Here is a 468-residue protein sequence, read N- to C-terminus: Transmembrane protein 151B (468 aa).

Residues 1 to 25 (MPEDGGGDSGDVPEIIPDGEPLREE) form a disordered region. Helical transmembrane passes span 45–65 (CLLL…CRLA) and 98–118 (YLYI…AECW). A disordered region spans residues 384-438 (VSSNSLPPARPSGPRLPFSRSRLSLGAGGRATPGVFRSLSGGPLGRRGEDTEPLE).

This sequence belongs to the TMEM151 family.

It is found in the membrane. The protein is Transmembrane protein 151B (TMEM151B) of Bos taurus (Bovine).